We begin with the raw amino-acid sequence, 321 residues long: Protein-L-isoaspartate O-methyltransferase (321 aa).

Residues 21 to 31 are compositionally biased toward basic and acidic residues; sequence KPAERQREKRI. The tract at residues 21-65 is disordered; the sequence is KPAERQREKRISSGVNAVSLPTPARTASAERASSTPAPGPGPQRV. Over residues 41–56 the composition is skewed to low complexity; sequence PTPARTASAERASSTP. Residue Ser153 is part of the active site.

This sequence belongs to the methyltransferase superfamily. L-isoaspartyl/D-aspartyl protein methyltransferase family.

Its subcellular location is the cytoplasm. It carries out the reaction [protein]-L-isoaspartate + S-adenosyl-L-methionine = [protein]-L-isoaspartate alpha-methyl ester + S-adenosyl-L-homocysteine. Functionally, catalyzes the methyl esterification of L-isoaspartyl residues in peptides and proteins that result from spontaneous decomposition of normal L-aspartyl and L-asparaginyl residues. It plays a role in the repair and/or degradation of damaged proteins. The polypeptide is Protein-L-isoaspartate O-methyltransferase (Ralstonia nicotianae (strain ATCC BAA-1114 / GMI1000) (Ralstonia solanacearum)).